Consider the following 340-residue polypeptide: Glycerol-3-phosphate dehydrogenase [NAD(P)+] (340 aa).

NADPH-binding residues include Ser-15, Tyr-16, His-36, and Lys-110. Positions 110, 139, and 141 each coordinate sn-glycerol 3-phosphate. Ala-143 lines the NADPH pocket. The sn-glycerol 3-phosphate site is built by Lys-196, Asp-249, Ser-259, Arg-260, and Asn-261. The Proton acceptor role is filled by Lys-196. Arg-260 provides a ligand contact to NADPH. The NADPH site is built by Val-284 and Glu-286.

It belongs to the NAD-dependent glycerol-3-phosphate dehydrogenase family.

The protein localises to the cytoplasm. It catalyses the reaction sn-glycerol 3-phosphate + NAD(+) = dihydroxyacetone phosphate + NADH + H(+). It carries out the reaction sn-glycerol 3-phosphate + NADP(+) = dihydroxyacetone phosphate + NADPH + H(+). Its pathway is membrane lipid metabolism; glycerophospholipid metabolism. Functionally, catalyzes the reduction of the glycolytic intermediate dihydroxyacetone phosphate (DHAP) to sn-glycerol 3-phosphate (G3P), the key precursor for phospholipid synthesis. This is Glycerol-3-phosphate dehydrogenase [NAD(P)+] from Serratia marcescens.